Consider the following 1429-residue polypeptide: Probable ATP-dependent RNA helicase spindle-E (1429 aa).

Positions 121 to 288 (VNAINTHQVV…FSTKVSVPPV (168 aa)) constitute a Helicase ATP-binding domain. Position 134–141 (134–141 (GETGCGKT)) interacts with ATP. Positions 234–237 (DEVH) match the DEAH box motif. The 173-residue stretch at 349 to 521 (QSEQSYDDAK…NSVLKAKLLD (173 aa)) folds into the Helicase C-terminal domain. One can recognise a Tudor domain in the interval 933–996 (AGVLTKGMMV…RLMTKELLSQ (64 aa)).

The protein belongs to the DEAD box helicase family. DEAH subfamily.

It localises to the cytoplasm. It catalyses the reaction ATP + H2O = ADP + phosphate + H(+). Its function is as follows. Probable ATP-binding RNA helicase which plays a central role during spermatogenesis and oogenesis by repressing transposable elements and preventing their mobilization, which is essential for the germline integrity. Acts via the piRNA metabolic process, which mediates the repression of transposable elements during meiosis by forming complexes composed of piRNAs and Piwi and govern the methylation and subsequent repression of transposons. Involved in the repression of LTR retrotransposon copia. Also involved in telomere regulation by repressing specialized telomeric retroelements HeT-A, TAHRE, and TART; Drosophila telomeres being maintained by transposition of specialized telomeric retroelements. Involved in telomeric trans-silencing, a repression mechanism by which a transposon or a transgene inserted in subtelomeric heterochromatin has the capacity to repress in trans in the female germline, a homologous transposon, or transgene located in euchromatin. Involved in the repression of testis-expressed Stellate genes by the homologous Su(Ste) repeats. Required for anteroposterior and dorsoventral axis formation during oogenesis. The sequence is that of Probable ATP-dependent RNA helicase spindle-E (spn-E) from Drosophila ananassae (Fruit fly).